The following is a 415-amino-acid chain: Dihydroorotase (415 aa).

Zn(2+) is bound by residues His54 and His56. Substrate-binding positions include 56 to 58 (HFR) and Asn88. 4 residues coordinate Zn(2+): Lys136, His169, His217, and Asp278. Lys136 is modified (N6-carboxylysine). Asp278 is a catalytic residue. Substrate is bound at residue His282.

This sequence belongs to the metallo-dependent hydrolases superfamily. DHOase family. Class I DHOase subfamily. It depends on Zn(2+) as a cofactor.

The catalysed reaction is (S)-dihydroorotate + H2O = N-carbamoyl-L-aspartate + H(+). It functions in the pathway pyrimidine metabolism; UMP biosynthesis via de novo pathway; (S)-dihydroorotate from bicarbonate: step 3/3. In terms of biological role, catalyzes the reversible cyclization of carbamoyl aspartate to dihydroorotate. This chain is Dihydroorotase, found in Thermoplasma volcanium (strain ATCC 51530 / DSM 4299 / JCM 9571 / NBRC 15438 / GSS1).